Here is a 469-residue protein sequence, read N- to C-terminus: L-seryl-tRNA(Sec) selenium transferase (469 aa).

Lysine 298 carries the post-translational modification N6-(pyridoxal phosphate)lysine.

The protein belongs to the SelA family. The cofactor is pyridoxal 5'-phosphate.

It is found in the cytoplasm. The catalysed reaction is L-seryl-tRNA(Sec) + selenophosphate + H(+) = L-selenocysteinyl-tRNA(Sec) + phosphate. The protein operates within aminoacyl-tRNA biosynthesis; selenocysteinyl-tRNA(Sec) biosynthesis; selenocysteinyl-tRNA(Sec) from L-seryl-tRNA(Sec) (bacterial route): step 1/1. Functionally, converts seryl-tRNA(Sec) to selenocysteinyl-tRNA(Sec) required for selenoprotein biosynthesis. This Nitratidesulfovibrio vulgaris (strain ATCC 29579 / DSM 644 / CCUG 34227 / NCIMB 8303 / VKM B-1760 / Hildenborough) (Desulfovibrio vulgaris) protein is L-seryl-tRNA(Sec) selenium transferase.